Here is a 352-residue protein sequence, read N- to C-terminus: Cysteinyl leukotriene receptor 1 (352 aa).

The Extracellular segment spans residues 1-43; that stretch reads MYLQGTKQTFLENMNGTENLTTSLINNTCHDTIDEFRNQVYST. N-linked (GlcNAc...) asparagine glycosylation is found at N15, N19, and N26. A helical membrane pass occupies residues 44–64; it reads MYSVISVVGFFGNSFVLYVLI. Over 65–72 the chain is Cytoplasmic; the sequence is KTYHEKSA. The helical transmembrane segment at 73–93 threads the bilayer; that stretch reads FQVYMINLAIADLLCVCTLPL. Residues 94–121 are Extracellular-facing; it reads RVVYYVHKGKWLFGDFLCRLTTYALYVN. C111 and C188 are oxidised to a cystine. A helical transmembrane segment spans residues 122–142; that stretch reads LYCSIFFMTAMSFFRCVAIVF. Residues 143-156 lie on the Cytoplasmic side of the membrane; the sequence is PVQNINLVTQKKAR. The chain crosses the membrane as a helical span at residues 157–177; sequence FVCIGIWIFVILTSSPFLMYK. At 178 to 208 the chain is on the extracellular side; it reads SYQDEKNNTKCFEPPQNNQAKKYVLILHYVS. N184 carries N-linked (GlcNAc...) asparagine glycosylation. A helical membrane pass occupies residues 209–229; that stretch reads LFFGFIIPFVTIIVCYTMIIL. The Cytoplasmic portion of the chain corresponds to 230–245; the sequence is TLLKNTMKKNMPSRRK. The chain crosses the membrane as a helical span at residues 246 to 266; sequence AIGMIIVVTAAFLVSFMPYHI. Residues 267–291 lie on the Extracellular side of the membrane; that stretch reads QRTIHLHLLHSETRPCDSVLRMQKS. Residues 292 to 312 form a helical membrane-spanning segment; sequence VVITLSLAASNCCFDPLLYFF. Residues 313 to 352 lie on the Cytoplasmic side of the membrane; it reads SGGNFRRRLSTFRKHSLSSMTYVPKKKASLPEKGEEICNE.

This sequence belongs to the G-protein coupled receptor 1 family. As to expression, widely expressed, with higher expression in the lung and skin, intermediate levels in the heart, kidney and stomach and lower levels in several other tissues. Isoform 1 is the most abundant form in all tested tissues.

Its subcellular location is the cell membrane. In terms of biological role, receptor for cysteinyl leukotrienes mediating constriction of the microvascular smooth muscle during an inflammatory response. This response is mediated via a G-protein that activates a phosphatidylinositol-calcium second messenger system. The rank order of affinities for the leukotrienes is LTD4 &gt;&gt; LTE4 = LTC4 &gt;&gt; LTB4. This Mus musculus (Mouse) protein is Cysteinyl leukotriene receptor 1 (Cysltr1).